The primary structure comprises 174 residues: Shikimate kinase 2 (174 aa).

ATP is bound at residue 12 to 17 (GAGKTT). Positions 16 and 32 each coordinate Mg(2+). The substrate site is built by Asp34, Arg58, and Gly79. The interval 112–126 (MQQPESTQRPSLTGK) is LID domain. An ATP-binding site is contributed by Arg120. Substrate is bound at residue Arg139.

Belongs to the shikimate kinase family. AroL subfamily. Monomer. Mg(2+) serves as cofactor.

The protein resides in the cytoplasm. The catalysed reaction is shikimate + ATP = 3-phosphoshikimate + ADP + H(+). The protein operates within metabolic intermediate biosynthesis; chorismate biosynthesis; chorismate from D-erythrose 4-phosphate and phosphoenolpyruvate: step 5/7. Functionally, catalyzes the specific phosphorylation of the 3-hydroxyl group of shikimic acid using ATP as a cosubstrate. The chain is Shikimate kinase 2 from Photorhabdus laumondii subsp. laumondii (strain DSM 15139 / CIP 105565 / TT01) (Photorhabdus luminescens subsp. laumondii).